A 349-amino-acid chain; its full sequence is Isopentenyl-diphosphate delta-isomerase (349 aa).

5–6 (RK) serves as a coordination point for substrate. Residues Ser-62, 63 to 65 (AIT), Ser-93, and Asn-122 each bind FMN. Substrate is bound at residue 93–95 (SQR). Position 151 (Gln-151) interacts with substrate. Mg(2+) is bound at residue Glu-152. FMN is bound by residues Lys-183, Thr-213, 259–261 (GIR), and 280–281 (AL).

Belongs to the IPP isomerase type 2 family. As to quaternary structure, homooctamer. Dimer of tetramers. It depends on FMN as a cofactor. The cofactor is NADPH. Mg(2+) serves as cofactor.

It localises to the cytoplasm. It carries out the reaction isopentenyl diphosphate = dimethylallyl diphosphate. Involved in the biosynthesis of isoprenoids. Catalyzes the 1,3-allylic rearrangement of the homoallylic substrate isopentenyl (IPP) to its allylic isomer, dimethylallyl diphosphate (DMAPP). This is Isopentenyl-diphosphate delta-isomerase from Methanothermobacter thermautotrophicus (strain ATCC 29096 / DSM 1053 / JCM 10044 / NBRC 100330 / Delta H) (Methanobacterium thermoautotrophicum).